A 238-amino-acid polypeptide reads, in one-letter code: Lipid transferase CIDEC (238 aa).

The interval 1 to 35 is required for liquid-liquid phase separation (LLPS); the sequence is MDYAMKSLSLLYPRSLSRHVAVSTAVVTQQLVSEP. In terms of domain architecture, CIDE-N spans 41–118; sequence RARPCRVSTA…VLQKGQKWKS (78 aa).

Belongs to the CIDE family. In terms of assembly, homodimer. Interacts with CIDEA. Homooligomer; undergoes liquid-liquid phase separation (LLPS) via its N-terminus, facilitating lipid droplet fusion, occurs at the lipid droplet contact sites. Interacts with PLIN1. Interacts with NFAT5; this interaction is direct and retains NFAT5 in the cytoplasm. Interacts with CEBPB. Interacts with isoform CLSTN3beta of CLSTN3; inhibiting the lipid transferase activity of CIDEC. In terms of processing, ubiquitinated and targeted to proteasomal degradation, resulting in a short half-life (about 15 minutes in 3T3-L1 cells). Protein stability depends on triaclyglycerol synthesis, fatty acid availability and lipid droplet formation.

It localises to the lipid droplet. The protein localises to the endoplasmic reticulum. Its subcellular location is the nucleus. The enzyme catalyses a triacyl-sn-glycerol(in) = a triacyl-sn-glycerol(out). In terms of biological role, lipid transferase specifically expressed in white adipose tissue, which promotes unilocular lipid droplet formation by mediating lipid droplet fusion. Lipid droplet fusion promotes their enlargement, restricting lipolysis and favoring lipid storage. Localizes on the lipid droplet surface, at focal contact sites between lipid droplets, and mediates atypical lipid droplet fusion by undergoing liquid-liquid phase separation (LLPS) and promoting directional net neutral lipid transfer from the smaller to larger lipid droplets. The transfer direction may be driven by the internal pressure difference between the contacting lipid droplet pair. Its role in neutral lipid transfer and lipid droplet enlargement is activated by the interaction with PLIN1. May also act as a CEBPB coactivator in the white adipose tissue to control the expression of a subset of CEBPB downstream target genes, including SOCS1, SOCS3, TGFB1, TGFBR1, ID2 and XDH. When overexpressed in preadipocytes, induces apoptosis or increases cell susceptibility to apoptosis induced by serum deprivation or TGFB treatment. The protein is Lipid transferase CIDEC of Rattus norvegicus (Rat).